The sequence spans 444 residues: UDP-N-acetylmuramate--L-alanine ligase (444 aa).

An ATP-binding site is contributed by 111–117 (GAHGKTS).

It belongs to the MurCDEF family.

It is found in the cytoplasm. The enzyme catalyses UDP-N-acetyl-alpha-D-muramate + L-alanine + ATP = UDP-N-acetyl-alpha-D-muramoyl-L-alanine + ADP + phosphate + H(+). It functions in the pathway cell wall biogenesis; peptidoglycan biosynthesis. Functionally, cell wall formation. The polypeptide is UDP-N-acetylmuramate--L-alanine ligase (Leuconostoc mesenteroides subsp. mesenteroides (strain ATCC 8293 / DSM 20343 / BCRC 11652 / CCM 1803 / JCM 6124 / NCDO 523 / NBRC 100496 / NCIMB 8023 / NCTC 12954 / NRRL B-1118 / 37Y)).